The primary structure comprises 204 residues: MEKLTKRQQDILDFIKLKVQEKGYPPSVREIGQAVGLASSSTVHGHLSRLEEKGYIRRDPTKPRAIEILGDNRTETQSVIQVPIIGKVTAGLPITAVESVEDHFPLPASIVAGADQVFMLRISGDSMIEAGIFDGDLVVVRQQQSAYNGEIVVALTEDNEATVKRFYKEKDHFRLQPENSSLEPIILKQVSVIGKVIGVYRDLH.

A DNA-binding region (H-T-H motif) is located at residues 28-48 (VREIGQAVGLASSSTVHGHLS). Active-site for autocatalytic cleavage activity residues include Ser126 and Lys164.

Belongs to the peptidase S24 family. Homodimer.

The enzyme catalyses Hydrolysis of Ala-|-Gly bond in repressor LexA.. Its function is as follows. Represses a number of genes involved in the response to DNA damage (SOS response), including recA and lexA. In the presence of single-stranded DNA, RecA interacts with LexA causing an autocatalytic cleavage which disrupts the DNA-binding part of LexA, leading to derepression of the SOS regulon and eventually DNA repair. This chain is LexA repressor, found in Bacillus mycoides (strain KBAB4) (Bacillus weihenstephanensis).